The chain runs to 556 residues: Phospholipase D (556 aa).

An N-terminal signal peptide occupies residues 1–47 (MTSDQRPARLPTHKGKLLAPHRLHRLIPVSVALTTVCAALPSSTAYA). The PLD phosphodiesterase 1 domain maps to 210-237 (SLSWNHSKLLVVDGKTAITGGINGWKDD). The segment at 326 to 360 (SDPSSGYHPDLPTAPDTKCTVGLHDNTNADRDYDT) is disordered. A PLD phosphodiesterase 2 domain is found at 484 to 511 (KPYALHHKLVSVDDSAFYIGSKNLYPAW).

The protein belongs to the phospholipase D family. In terms of processing, probably has at least 1 disulfide bond.

It is found in the secreted. The enzyme catalyses a 1,2-diacyl-sn-glycero-3-phosphocholine + H2O = a 1,2-diacyl-sn-glycero-3-phosphate + choline + H(+). Its activity is regulated as follows. Inhibited by mercaptoethanol and dithiothreitol. Functionally, a reversible phospholipase active on phosphatidylcholine (PC) and phosphatidylethanolamine. Lysophosphatidylcholine and egg sphingomyelin are hydrolyzed about 50 times and 100 times more slowly than PC, respectively. During the transphosphatidylation reaction straight-chain hydroxy compounds, such as triethyleneglycol and triethyleneglycol monomethyl ether, were phosphatidylated in good yield, as were monosaccharides. Disaccharides and sugar alcohol reacted slowly, while N-acetyl-D-galactosamine, D-galactosamine and D-galacturonic acid were not phosphatidylated. The chain is Phospholipase D from Streptomyces antibioticus.